Consider the following 640-residue polypeptide: Threonine--tRNA ligase (640 aa).

The region spanning 1–61 is the TGS domain; the sequence is MPTITLPDGS…ENDASLQIIT (61 aa). Positions 242 to 533 are catalytic; that stretch reads DHRKIGKRLG…LIEHYEGAFP (292 aa). Cysteine 333, histidine 384, and histidine 510 together coordinate Zn(2+).

It belongs to the class-II aminoacyl-tRNA synthetase family. In terms of assembly, homodimer. Zn(2+) is required as a cofactor.

It is found in the cytoplasm. The catalysed reaction is tRNA(Thr) + L-threonine + ATP = L-threonyl-tRNA(Thr) + AMP + diphosphate + H(+). Its function is as follows. Catalyzes the attachment of threonine to tRNA(Thr) in a two-step reaction: L-threonine is first activated by ATP to form Thr-AMP and then transferred to the acceptor end of tRNA(Thr). Also edits incorrectly charged L-seryl-tRNA(Thr). This Pseudomonas syringae pv. tomato (strain ATCC BAA-871 / DC3000) protein is Threonine--tRNA ligase.